The sequence spans 333 residues: Eukaryotic translation initiation factor 2 subunit 2 (333 aa).

Disordered stretches follow at residues 1–87, 98–117, and 141–165; these read MSGD…KSKK, IKDL…EEDL, and EKDE…QTGP. S2 is subject to N-acetylserine. A phosphoserine mark is found at S2 and S13. Positions 13–22 are enriched in basic residues; the sequence is SKKKKKKKKP. T36 carries the phosphothreonine modification. Residues 40 to 51 show a composition bias toward basic and acidic residues; the sequence is ETKEVEPEPTED. S67 is subject to Phosphoserine. K102 is covalently cross-linked (Glycyl lysine isopeptide (Lys-Gly) (interchain with G-Cter in SUMO2)). S105 carries the post-translational modification Phosphoserine. A compositionally biased stretch (acidic residues) spans 106 to 117; that stretch reads DVQEPAEPEEDL. 2 positions are modified to phosphoserine: S158 and S218. N6-acetyllysine occurs at positions 265 and 293. The C4-type zinc finger occupies 281–305; the sequence is CHTCRSPDTILQKDTRLYFLQCETC.

The protein belongs to the eIF-2-beta/eIF-5 family. Eukaryotic translation initiation factor 2 eIF2 is a heterotrimeric complex composed of an alpha (EIF2S1), a beta (EIF2S2) and a gamma (EIF2S3) chain. eIF2 is member of the 43S pre-initiation complex (43S PIC). eIF2 forms a complex with at least CELF1/CUGBP1, CALR, CALR3, EIF2S1, EIF2S2, HSP90B1 and HSPA5. Interacts with BZW2/5MP1. Interacts with EIF5.

It localises to the cytoplasm. The protein resides in the cytosol. Functionally, component of the eIF2 complex that functions in the early steps of protein synthesis by forming a ternary complex with GTP and initiator tRNA. This complex binds to a 40S ribosomal subunit, followed by mRNA binding to form a 43S pre-initiation complex (43S PIC). Junction of the 60S ribosomal subunit to form the 80S initiation complex is preceded by hydrolysis of the GTP bound to eIF2 and release of an eIF2-GDP binary complex. In order for eIF2 to recycle and catalyze another round of initiation, the GDP bound to eIF2 must exchange with GTP by way of a reaction catalyzed by eIF2B. This Bos taurus (Bovine) protein is Eukaryotic translation initiation factor 2 subunit 2 (EIF2S2).